The chain runs to 301 residues: MRVTSPEIQRGIKVSELLDMFGSTAFNARRLGEAAKICEEMVKSDSFVFLTLAGAMIPAGMRKIVAGMMQNGFISSLVTTGANIVHEIVESLGIGHEIGSCYVDDTALAEESINRIYDVFVGQEAFERVEEFLSGIIEGLDGIYTTYEFLWEVGKRIPDERSFLRIAAEREIPVFCPTLHDSIAGLHMTIYRKNLQIDFFRDVSRIIDFCFQKRKMGVIVVGGGVPKNFTLQAMLLAEGFDYAVQITTDSPQWGGLSGATLEEAKSWCKLKPDAKAVTVYCDATIALPMLYAYLLDRCGES.

K269 serves as the catalytic Nucleophile.

The protein belongs to the deoxyhypusine synthase family. The cofactor is NAD(+).

It carries out the reaction [eIF5A protein]-L-lysine + spermidine = [eIF5A protein]-deoxyhypusine + propane-1,3-diamine. Its pathway is protein modification; eIF5A hypusination. Functionally, catalyzes the NAD-dependent oxidative cleavage of spermidine and the subsequent transfer of the butylamine moiety of spermidine to the epsilon-amino group of a specific lysine residue of the eIF-5A precursor protein to form the intermediate deoxyhypusine residue. The protein is Probable deoxyhypusine synthase 1 (dys1) of Archaeoglobus fulgidus (strain ATCC 49558 / DSM 4304 / JCM 9628 / NBRC 100126 / VC-16).